The chain runs to 238 residues: Probable transglycosylase SceD 3 (238 aa).

The N-terminal stretch at 1 to 27 (MKKTVVASTLAVGLGVTGFAAGNSADA) is a signal peptide. Residues 82–161 (YGQGSTNAPA…SEASEGSSVN (80 aa)) form a disordered region. Low complexity predominate over residues 89-156 (APAQETAEQP…NESSSSEASE (68 aa)).

It belongs to the transglycosylase family. SceD subfamily.

The protein localises to the secreted. Functionally, is able to cleave peptidoglycan and affects clumping and separation of bacterial cells. The sequence is that of Probable transglycosylase SceD 3 (sceD3) from Staphylococcus saprophyticus subsp. saprophyticus (strain ATCC 15305 / DSM 20229 / NCIMB 8711 / NCTC 7292 / S-41).